A 276-amino-acid chain; its full sequence is Potassium/proton antiporter CemA (276 aa).

3 helical membrane passes run L59–G79, F199–V219, and F236–I256.

Belongs to the CemA family.

The protein localises to the plastid. The protein resides in the chloroplast inner membrane. The catalysed reaction is K(+)(in) + H(+)(out) = K(+)(out) + H(+)(in). Its function is as follows. Contributes to K(+)/H(+) antiport activity by supporting proton efflux to control proton extrusion and homeostasis in chloroplasts in a light-dependent manner to modulate photosynthesis. Prevents excessive induction of non-photochemical quenching (NPQ) under continuous-light conditions. Indirectly promotes efficient inorganic carbon uptake into chloroplasts. The sequence is that of Potassium/proton antiporter CemA from Cyanidioschyzon merolae (strain NIES-3377 / 10D) (Unicellular red alga).